Consider the following 550-residue polypeptide: Glucose-6-phosphate isomerase (550 aa).

Glu357 serves as the catalytic Proton donor. Residues His389 and Lys509 contribute to the active site.

It belongs to the GPI family.

The protein resides in the cytoplasm. It catalyses the reaction alpha-D-glucose 6-phosphate = beta-D-fructose 6-phosphate. The protein operates within carbohydrate biosynthesis; gluconeogenesis. Its pathway is carbohydrate degradation; glycolysis; D-glyceraldehyde 3-phosphate and glycerone phosphate from D-glucose: step 2/4. Its function is as follows. Catalyzes the reversible isomerization of glucose-6-phosphate to fructose-6-phosphate. The chain is Glucose-6-phosphate isomerase from Anaeromyxobacter dehalogenans (strain 2CP-C).